An 86-amino-acid polypeptide reads, in one-letter code: Acyl-CoA-binding protein homolog 1 (86 aa).

The ACB domain maps to 1-86; it reads MTLSFDDAAA…VEELIAKYGA (86 aa). An acyl-CoA is bound by residues K13, 28 to 32, K50, K54, and Y73; that span reads YALFK.

It belongs to the ACBP family.

In terms of biological role, binds medium- and long-chain acyl-CoA esters with very high affinity and may function as an intracellular carrier of acyl-CoA esters. In Caenorhabditis elegans, this protein is Acyl-CoA-binding protein homolog 1 (acbp-1).